A 607-amino-acid polypeptide reads, in one-letter code: UvrABC system protein C (607 aa).

Residues 16-94 (GRPGVYRMFD…IKEWRPPYNI (79 aa)) enclose the GIY-YIG domain. The UVR domain maps to 203–238 (QQLGNELNAEMEKAAMALDFEKAAELRDQIALLRRV).

The protein belongs to the UvrC family. Interacts with UvrB in an incision complex.

The protein localises to the cytoplasm. Functionally, the UvrABC repair system catalyzes the recognition and processing of DNA lesions. UvrC both incises the 5' and 3' sides of the lesion. The N-terminal half is responsible for the 3' incision and the C-terminal half is responsible for the 5' incision. The polypeptide is UvrABC system protein C (Pseudomonas putida (strain ATCC 47054 / DSM 6125 / CFBP 8728 / NCIMB 11950 / KT2440)).